We begin with the raw amino-acid sequence, 836 residues long: DNA gyrase subunit A (836 aa).

Residues 34–500 (LPDARDGLKP…AGDVRDIEDI (467 aa)) form the Topo IIA-type catalytic domain. Tyrosine 122 acts as the O-(5'-phospho-DNA)-tyrosine intermediate in catalysis. Positions 527–533 (QKRGGQG) match the GyrA-box motif.

This sequence belongs to the type II topoisomerase GyrA/ParC subunit family. Heterotetramer, composed of two GyrA and two GyrB chains. In the heterotetramer, GyrA contains the active site tyrosine that forms a transient covalent intermediate with DNA, while GyrB binds cofactors and catalyzes ATP hydrolysis.

It localises to the cytoplasm. It carries out the reaction ATP-dependent breakage, passage and rejoining of double-stranded DNA.. A type II topoisomerase that negatively supercoils closed circular double-stranded (ds) DNA in an ATP-dependent manner to modulate DNA topology and maintain chromosomes in an underwound state. Negative supercoiling favors strand separation, and DNA replication, transcription, recombination and repair, all of which involve strand separation. Also able to catalyze the interconversion of other topological isomers of dsDNA rings, including catenanes and knotted rings. Type II topoisomerases break and join 2 DNA strands simultaneously in an ATP-dependent manner. The polypeptide is DNA gyrase subunit A (Chlamydia trachomatis serovar D (strain ATCC VR-885 / DSM 19411 / UW-3/Cx)).